The following is a 395-amino-acid chain: Acid ceramidase (395 aa).

Residues 1-21 (MPGRSCVALVLLAAAVSCAVA) form the signal peptide. A disulfide bridge links Cys-31 with Cys-340. The active-site Nucleophile is the Cys-143. 6 N-linked (GlcNAc...) asparagine glycosylation sites follow: Asn-173, Asn-195, Asn-259, Asn-286, Asn-342, and Asn-348. Cysteines 388 and 392 form a disulfide.

The protein belongs to the acid ceramidase family. Heterodimer; disulfide-linked. The heterodimer is composed of the disulfide-linked alpha and beta chains produced by autocatalytic cleavage of the precursor. Isoform 2: May interact with NR5A1 in the nucleus; the direct interaction would negatively regulate NR5A1 transcriptional activity. N-glycosylated. Post-translationally, proteolytically cleaved into two chains alpha and beta that remain associated via a disulfide bond. Cleavage gives rise to a conformation change that activates the enzyme. The same catalytic Cys residue mediates the autoproteolytic cleavage and subsequent hydrolysis of lipid substrates. The beta chain may undergo an additional C-terminal processing. In terms of tissue distribution, broadly expressed with higher expression in heart.

The protein localises to the lysosome. The protein resides in the secreted. It localises to the nucleus. It is found in the cytoplasm. It carries out the reaction an N-acylsphing-4-enine + H2O = sphing-4-enine + a fatty acid. The enzyme catalyses a beta-D-glucosyl-(1&lt;-&gt;1')-N-acylsphing-4-enine + H2O = beta-D-glucosyl-(1&lt;-&gt;1)-sphing-4-enine + a fatty acid. It catalyses the reaction a globoside Gb3Cer + H2O = a lysoGb3 + a fatty acid. The catalysed reaction is a globoside Gb3Cer (d18:1(4E)) + H2O = a lysoGb3(d18:1(4E)) + a fatty acid. It carries out the reaction N-dodecanoylsphing-4-enine + H2O = dodecanoate + sphing-4-enine. The enzyme catalyses N-tetradecanoylsphing-4-enine + H2O = tetradecanoate + sphing-4-enine. It catalyses the reaction N-hexadecanoylsphing-4-enine + H2O = sphing-4-enine + hexadecanoate. The catalysed reaction is N-octadecanoylsphing-4-enine + H2O = sphing-4-enine + octadecanoate. It carries out the reaction N-dodecanoyl-(4R)-hydroxysphinganine + H2O = (4R)-hydroxysphinganine + dodecanoate. The enzyme catalyses N-(dodecanoyl)-sphinganine + H2O = dodecanoate + sphinganine. It catalyses the reaction N-(acetyl)-sphing-4-enine + H2O = sphing-4-enine + acetate. The catalysed reaction is N-(hexanoyl)sphing-4-enine + H2O = hexanoate + sphing-4-enine. It carries out the reaction N-octanoylsphing-4-enine + H2O = octanoate + sphing-4-enine. The enzyme catalyses N-(9Z-octadecenoyl)-sphing-4-enine + H2O = sphing-4-enine + (9Z)-octadecenoate. It catalyses the reaction N-dodecanoylethanolamine + H2O = dodecanoate + ethanolamine. It participates in lipid metabolism; sphingolipid metabolism. Its activity is regulated as follows. Activated by Ca(2+), Mg(2+) and Na(+) cations. Inhibited by Zn(2+). Phosphatidylserine and phosphatidic acid stimulate while cardiolipin, phosphatidylcholine, lysophosphatidylcholine, phosphatidylethanolamine, phosphatidylinositol and sphingomyelin inhibit the reverse ceramide synthase activity. Phosphatidic acid, phosphatidylinositol and C16-ceramide inhibit the ceramidase/hydrolase activity. In terms of biological role, lysosomal ceramidase that hydrolyzes sphingolipid ceramides into sphingosine and free fatty acids at acidic pH. Ceramides, sphingosine, and its phosphorylated form sphingosine-1-phosphate are bioactive lipids that mediate cellular signaling pathways regulating several biological processes including cell proliferation, apoptosis and differentiation. Has a higher catalytic efficiency towards C12-ceramides versus other ceramides. Also catalyzes the reverse reaction allowing the synthesis of ceramides from fatty acids and sphingosine. For the reverse synthetic reaction, the natural sphingosine D-erythro isomer is more efficiently utilized as a substrate compared to D-erythro-dihydrosphingosine and D-erythro-phytosphingosine, while the fatty acids with chain lengths of 12 or 14 carbons are the most efficiently used. Also has an N-acylethanolamine hydrolase activity. By regulating the levels of ceramides, sphingosine and sphingosine-1-phosphate in the epidermis, mediates the calcium-induced differentiation of epidermal keratinocytes. Also indirectly regulates tumor necrosis factor/TNF-induced apoptosis. By regulating the intracellular balance between ceramides and sphingosine, in adrenocortical cells, probably also acts as a regulator of steroidogenesis. Functionally, may directly regulate steroidogenesis by binding the nuclear receptor NR5A1 and negatively regulating its transcriptional activity. The polypeptide is Acid ceramidase (Homo sapiens (Human)).